The following is a 238-amino-acid chain: Probable transcriptional regulatory protein Sde_1551 (238 aa).

The protein belongs to the TACO1 family.

The protein resides in the cytoplasm. The sequence is that of Probable transcriptional regulatory protein Sde_1551 from Saccharophagus degradans (strain 2-40 / ATCC 43961 / DSM 17024).